The primary structure comprises 412 residues: Autophagy-related protein 18 (412 aa).

3 WD repeats span residues 100 to 139 (RFNK…NIMD), 142 to 183 (TNKL…SVST), and 186 to 226 (AHEG…RLFE). Positions 227 to 230 (FRRG) match the L/FRRG motif motif. Residues 232–271 (TRCVNIYSLCFSSDSKYLTSSSNTETVHVFKLEKTEGVDN) form a WD 4 repeat. The segment at 363 to 412 (HNIGPKSDTSRASPTSTGSGGAAKSAEASNQSVPNMDDPDDFPPMSHTSG) is disordered. Positions 372–391 (SRASPTSTGSGGAAKSAEAS) are enriched in low complexity.

It belongs to the WD repeat PROPPIN family. Expressed in neurons and intestinal cells.

Its subcellular location is the cytoplasmic vesicle. The protein resides in the phagosome membrane. It is found in the cytoplasm. Its function is as follows. Component of the autophagy machinery that is recruited to phosphatidylinositols on preautophagosomal structures, which are early autophagic structures, to promote autophagosome formation, and the subsequent degradation and clearance of engulfed apoptotic cells and P-granules in somatic cells. In particular, binds with high affinity to phosphatidylinositols including phosphatidylinositol 3-phosphate (PtdIns(3)P), phosphatidylinositol 4-phosphate (PtdIns(4)P), and phosphatidylinositol 5-phosphate (PtdIns(5)P), and more weakly to phosphatidylinositol 3,5-bisphosphate (PtdIns(3,5)P2). Plays a role in mitophagy, which is the autophagic consumption of mitochondria, in response to dietary restriction. Involved in xenophagy, the autophagy-mediated degradation of pathogens and pathogen products, such as toxins. Also plays a role in membrane-pore repair. In a daf-18/PTEN- and daf-16/FOXO-dependent manner, required for the proliferation of germ stem cell progenitors in the gonad during the late phases of larval development. By regulating the release of neurotransmitters and neuropeptides, involved in the control of lifespan in response to dietary restriction and daf-2 signaling. Probably through its involvement in autophagy, required for dauer formation. The polypeptide is Autophagy-related protein 18 (Caenorhabditis elegans).